The chain runs to 210 residues: WASH complex subunit 3 (210 aa).

The stretch at Glu-49–Leu-73 forms a coiled coil. Positions Leu-173–Asp-210 are disordered. Residues Asp-195–Ser-204 show a composition bias toward acidic residues.

Belongs to the CCDC53 family. In terms of assembly, component of the WASH complex.

The protein is WASH complex subunit 3 of Salmo salar (Atlantic salmon).